Here is a 432-residue protein sequence, read N- to C-terminus: 3-phosphoshikimate 1-carboxyvinyltransferase (432 aa).

Residues Lys-23, Ser-24, and Arg-28 each contribute to the 3-phosphoshikimate site. Lys-23 contacts phosphoenolpyruvate. 2 residues coordinate phosphoenolpyruvate: Gly-95 and Arg-123. 4 residues coordinate 3-phosphoshikimate: Ser-167, Gln-169, Asp-317, and Lys-344. Gln-169 is a phosphoenolpyruvate binding site. The active-site Proton acceptor is Asp-317. Residues Arg-348 and Arg-390 each contribute to the phosphoenolpyruvate site.

Belongs to the EPSP synthase family. Monomer.

It is found in the cytoplasm. It carries out the reaction 3-phosphoshikimate + phosphoenolpyruvate = 5-O-(1-carboxyvinyl)-3-phosphoshikimate + phosphate. The protein operates within metabolic intermediate biosynthesis; chorismate biosynthesis; chorismate from D-erythrose 4-phosphate and phosphoenolpyruvate: step 6/7. Its function is as follows. Catalyzes the transfer of the enolpyruvyl moiety of phosphoenolpyruvate (PEP) to the 5-hydroxyl of shikimate-3-phosphate (S3P) to produce enolpyruvyl shikimate-3-phosphate and inorganic phosphate. In Staphylococcus aureus (strain COL), this protein is 3-phosphoshikimate 1-carboxyvinyltransferase.